The chain runs to 223 residues: Ribose-5-phosphate isomerase A (223 aa).

Residues 28–31, 81–84, and 94–97 contribute to the substrate site; these read TGST, DGTD, and KGGG. The active-site Proton acceptor is the Glu103. Position 121 (Lys121) interacts with substrate.

Belongs to the ribose 5-phosphate isomerase family. As to quaternary structure, homodimer.

The enzyme catalyses aldehydo-D-ribose 5-phosphate = D-ribulose 5-phosphate. Its pathway is carbohydrate degradation; pentose phosphate pathway; D-ribose 5-phosphate from D-ribulose 5-phosphate (non-oxidative stage): step 1/1. In terms of biological role, catalyzes the reversible conversion of ribose-5-phosphate to ribulose 5-phosphate. The sequence is that of Ribose-5-phosphate isomerase A from Baumannia cicadellinicola subsp. Homalodisca coagulata.